Here is a 149-residue protein sequence, read N- to C-terminus: UPF0179 protein Hlac_2319 (149 aa).

It belongs to the UPF0179 family.

This chain is UPF0179 protein Hlac_2319, found in Halorubrum lacusprofundi (strain ATCC 49239 / DSM 5036 / JCM 8891 / ACAM 34).